The chain runs to 339 residues: Tetraacyldisaccharide 4'-kinase (339 aa).

53 to 60 (TCGGAGKT) contacts ATP.

It belongs to the LpxK family.

It catalyses the reaction a lipid A disaccharide + ATP = a lipid IVA + ADP + H(+). It participates in glycolipid biosynthesis; lipid IV(A) biosynthesis; lipid IV(A) from (3R)-3-hydroxytetradecanoyl-[acyl-carrier-protein] and UDP-N-acetyl-alpha-D-glucosamine: step 6/6. Transfers the gamma-phosphate of ATP to the 4'-position of a tetraacyldisaccharide 1-phosphate intermediate (termed DS-1-P) to form tetraacyldisaccharide 1,4'-bis-phosphate (lipid IVA). This chain is Tetraacyldisaccharide 4'-kinase, found in Bartonella henselae (strain ATCC 49882 / DSM 28221 / CCUG 30454 / Houston 1) (Rochalimaea henselae).